A 102-amino-acid chain; its full sequence is Large ribosomal subunit protein bL21 (102 aa).

It belongs to the bacterial ribosomal protein bL21 family. Part of the 50S ribosomal subunit. Contacts protein L20.

Its function is as follows. This protein binds to 23S rRNA in the presence of protein L20. This chain is Large ribosomal subunit protein bL21, found in Syntrophotalea carbinolica (strain DSM 2380 / NBRC 103641 / GraBd1) (Pelobacter carbinolicus).